A 745-amino-acid polypeptide reads, in one-letter code: Inhibitor of nuclear factor kappa-B kinase subunit alpha (745 aa).

A Protein kinase domain is found at W15 to V302. ATP contacts are provided by residues L21 to V29 and K44. At T23 the chain carries Phosphothreonine; by PKB/AKT1 and SGK1. D144 acts as the Proton acceptor in catalysis. S176 is subject to Phosphoserine; by MAP3K14. Position 179 is a (Microbial infection) O-acetylthreonine; by Yersinia YopJ (T179). Residue S180 is modified to Phosphoserine; by SGK1. The interval L455–L476 is leucine-zipper. The NEMO-binding stretch occupies residues L738 to L743.

This sequence belongs to the protein kinase superfamily. Ser/Thr protein kinase family. I-kappa-B kinase subfamily. As to quaternary structure, component of the I-kappa-B-kinase (IKK) core complex consisting of CHUK, IKBKB and IKBKG; probably four alpha/CHUK-beta/IKBKB dimers are associated with four gamma/IKBKG subunits. The IKK core complex seems to associate with regulatory or adapter proteins to form a IKK-signalosome holo-complex. The IKK complex associates with TERF2IP/RAP1, leading to promote IKK-mediated phosphorylation of RELA/p65. Part of a complex composed of NCOA2, NCOA3, CHUK/IKKA, IKBKB, IKBKG and CREBBP. Part of a 70-90 kDa complex at least consisting of CHUK/IKKA, IKBKB, NFKBIA, RELA, ELP1 and MAP3K14. Directly interacts with TRPC4AP. May interact with TRAF2. Interacts with NALP2. May interact with MAVS/IPS1. Interacts with ARRB1 and ARRB2. Interacts with NLRC5; prevents CHUK phosphorylation and kinase activity. Interacts with PIAS1; this interaction induces PIAS1 phosphorylation. Interacts with ZNF268 isoform 2; the interaction is further increased in a TNF-alpha-dependent manner. Interacts with FOXO3. Interacts with IFIT5; the interaction synergizes the recruitment of IKK to MAP3K7 and enhances IKK phosphorylation. Interacts with LRRC14. Interacts with SASH1. Directly interacts with DDX3X after the physiological activation of the TLR7 and TLR8 pathways; this interaction enhances CHUK autophosphorylation. (Microbial infection) Interacts with InlC of Listeria monocytogenes. Post-translationally, phosphorylated by MAP3K14/NIK, AKT and to a lesser extent by MEKK1, and dephosphorylated by PP2A. Autophosphorylated. Ubiquitinated by TRIM56 via 'Lys-63'-linked ubiquitination, promoting activation of CHUK/IKKA. In terms of processing, (Microbial infection) Acetylation of Thr-179 by Yersinia YopJ prevents phosphorylation and activation, thus blocking the I-kappa-B signaling pathway. In terms of tissue distribution, widely expressed.

The protein localises to the cytoplasm. It is found in the nucleus. It catalyses the reaction L-seryl-[I-kappa-B protein] + ATP = O-phospho-L-seryl-[I-kappa-B protein] + ADP + H(+). With respect to regulation, activated when phosphorylated and inactivated when dephosphorylated. Serine kinase that plays an essential role in the NF-kappa-B signaling pathway which is activated by multiple stimuli such as inflammatory cytokines, bacterial or viral products, DNA damages or other cellular stresses. Acts as a part of the canonical IKK complex in the conventional pathway of NF-kappa-B activation and phosphorylates inhibitors of NF-kappa-B on serine residues. These modifications allow polyubiquitination of the inhibitors and subsequent degradation by the proteasome. In turn, free NF-kappa-B is translocated into the nucleus and activates the transcription of hundreds of genes involved in immune response, growth control, or protection against apoptosis. Negatively regulates the pathway by phosphorylating the scaffold protein TAXBP1 and thus promoting the assembly of the A20/TNFAIP3 ubiquitin-editing complex (composed of A20/TNFAIP3, TAX1BP1, and the E3 ligases ITCH and RNF11). Therefore, CHUK plays a key role in the negative feedback of NF-kappa-B canonical signaling to limit inflammatory gene activation. As part of the non-canonical pathway of NF-kappa-B activation, the MAP3K14-activated CHUK/IKKA homodimer phosphorylates NFKB2/p100 associated with RelB, inducing its proteolytic processing to NFKB2/p52 and the formation of NF-kappa-B RelB-p52 complexes. In turn, these complexes regulate genes encoding molecules involved in B-cell survival and lymphoid organogenesis. Also participates in the negative feedback of the non-canonical NF-kappa-B signaling pathway by phosphorylating and destabilizing MAP3K14/NIK. Within the nucleus, phosphorylates CREBBP and consequently increases both its transcriptional and histone acetyltransferase activities. Modulates chromatin accessibility at NF-kappa-B-responsive promoters by phosphorylating histones H3 at 'Ser-10' that are subsequently acetylated at 'Lys-14' by CREBBP. Additionally, phosphorylates the CREBBP-interacting protein NCOA3. Also phosphorylates FOXO3 and may regulate this pro-apoptotic transcription factor. Phosphorylates RIPK1 at 'Ser-25' which represses its kinase activity and consequently prevents TNF-mediated RIPK1-dependent cell death. Phosphorylates AMBRA1 following mitophagy induction, promoting AMBRA1 interaction with ATG8 family proteins and its mitophagic activity. The sequence is that of Inhibitor of nuclear factor kappa-B kinase subunit alpha (CHUK) from Homo sapiens (Human).